A 258-amino-acid chain; its full sequence is Mitochondrial distribution and morphology protein 12 (258 aa).

The SMP-LTD domain maps to 1 to 233 (MSFDIHWSNL…WPSWIELDFN (233 aa)). The interval 238 to 258 (EDLQQSKDTPTTANTGTTTTN) is disordered. A compositionally biased stretch (low complexity) spans 246 to 258 (TPTTANTGTTTTN).

The protein belongs to the MDM12 family. In terms of assembly, component of the ER-mitochondria encounter structure (ERMES) or MDM complex, composed of MMM1, MDM10, MDM12 and MDM34. An MMM1 homodimer associates with one molecule of MDM12 on each side in a pairwise head-to-tail manner, and the SMP-LTD domains of MMM1 and MDM12 generate a continuous hydrophobic tunnel for phospholipid trafficking.

The protein resides in the mitochondrion outer membrane. It localises to the endoplasmic reticulum membrane. Functionally, component of the ERMES/MDM complex, which serves as a molecular tether to connect the endoplasmic reticulum (ER) and mitochondria. Components of this complex are involved in the control of mitochondrial shape and protein biogenesis, and function in nonvesicular lipid trafficking between the ER and mitochondria. MDM12 is required for the interaction of the ER-resident membrane protein MMM1 and the outer mitochondrial membrane-resident beta-barrel protein MDM10. The MDM12-MMM1 subcomplex functions in the major beta-barrel assembly pathway that is responsible for biogenesis of all mitochondrial outer membrane beta-barrel proteins, and acts in a late step after the SAM complex. The MDM10-MDM12-MMM1 subcomplex further acts in the TOM40-specific pathway after the action of the MDM12-MMM1 complex. Essential for establishing and maintaining the structure of mitochondria and maintenance of mtDNA nucleoids. This Zygosaccharomyces rouxii (strain ATCC 2623 / CBS 732 / NBRC 1130 / NCYC 568 / NRRL Y-229) protein is Mitochondrial distribution and morphology protein 12.